The sequence spans 447 residues: MYLLLLLIMLNMLMMSMIYLFMLFMNKMKNNLNLIIGNLIIINLLLNLFNLNWIDWIYIFCNLSFNMYSYGLIMLTLWIFGLIFISLNNNSLNCLFMNLLLMISLLLVFLSMNLLLFYLFYEFGLLLIFYLVVKWGYSENRWLSGFYLMFYTMIFSLPMLYIIYYIYLIDYSLNFMLMEMLNLNLNMMLFIYLLMSFLVKIPIYLFHGWLLKAHVEAPYYGSMILASIMLKLGGYGMLRLMIIYKNEFILIQKILVMINSFGVLILSLMCLSQFDMKSIIAISSIVHMGLMIMSMMTFLKISLIGGYLMMISHGLSSSGLFFLVNVIYSQTNSRLMFINKGMINFMPSMSLLWFMLCSSNMGSPVSLNLISEVMLLIGMISWLKFMMLILMMYCLFSFIYSIYLFMFINHGKIFIMFKIKNGILVEYFVLLLHWIPLNLMFLKLYFI.

13 helical membrane passes run 4-24 (LLLL…FMLF), 34-54 (LIIG…LNWI), 67-87 (MYSY…FISL), 100-120 (LLMI…FYLF), 149-169 (MFYT…IYLI), 189-209 (LFIY…FHGW), 223-243 (MILA…LMII), 248-268 (FILI…ILSL), 279-299 (IIAI…MTFL), 304-324 (IGGY…FFLV), 349-371 (MSLL…NLIS), 388-408 (LILM…FMFI), and 422-442 (GILV…LMFL).

It belongs to the complex I subunit 4 family.

It localises to the mitochondrion membrane. It catalyses the reaction a ubiquinone + NADH + 5 H(+)(in) = a ubiquinol + NAD(+) + 4 H(+)(out). Functionally, core subunit of the mitochondrial membrane respiratory chain NADH dehydrogenase (Complex I) that is believed to belong to the minimal assembly required for catalysis. Complex I functions in the transfer of electrons from NADH to the respiratory chain. The immediate electron acceptor for the enzyme is believed to be ubiquinone. The chain is NADH-ubiquinone oxidoreductase chain 4 (ND4) from Apis mellifera ligustica (Common honeybee).